Here is a 278-residue protein sequence, read N- to C-terminus: Sulfur carrier protein FdhD (278 aa).

The active-site Cysteine persulfide intermediate is the cysteine 121. Residue 260–265 (FCKPGR) participates in Mo-bis(molybdopterin guanine dinucleotide) binding.

It belongs to the FdhD family.

Its subcellular location is the cytoplasm. In terms of biological role, required for formate dehydrogenase (FDH) activity. Acts as a sulfur carrier protein that transfers sulfur from IscS to the molybdenum cofactor prior to its insertion into FDH. The protein is Sulfur carrier protein FdhD of Salmonella paratyphi A (strain ATCC 9150 / SARB42).